Reading from the N-terminus, the 215-residue chain is Venom allergen 5.02 (215 aa).

The N-terminal stretch at 1 to 10 (PIINLSFGEA) is a signal peptide. Cystine bridges form between cysteine 14/cysteine 26, cysteine 18/cysteine 111, cysteine 36/cysteine 104, and cysteine 181/cysteine 198. One can recognise an SCP domain in the interval 55 to 200 (VNRHNQFRQK…WHTHYLVCNY (146 aa)).

This sequence belongs to the CRISP family. Venom allergen 5-like subfamily. As to expression, expressed by the venom gland.

It is found in the secreted. The sequence is that of Venom allergen 5.02 from Dolichovespula maculata (Bald-faced hornet).